We begin with the raw amino-acid sequence, 209 residues long: High frequency lysogenization protein HflD homolog (209 aa).

Belongs to the HflD family.

It is found in the cytoplasm. The protein localises to the cell inner membrane. This chain is High frequency lysogenization protein HflD homolog, found in Saccharophagus degradans (strain 2-40 / ATCC 43961 / DSM 17024).